The chain runs to 422 residues: GTPase Obg (422 aa).

In terms of domain architecture, Obg spans 2-157 (AKFIDEIKLT…YLAHIVLKVM (156 aa)). The 168-residue stretch at 158 to 325 (SDVGIIGKPS…LKGKIWKILE (168 aa)) folds into the OBG-type G domain. Residues 164-171 (GKPSAGKS), 189-193 (FTTLV), 210-213 (DLPG), 279-282 (NKSD), and 306-308 (SAI) each bind GTP. 2 residues coordinate Mg(2+): Ser-171 and Thr-191. Residues 334-420 (EEEETEENVE…ILDYEFEWDG (87 aa)) form the OCT domain.

It belongs to the TRAFAC class OBG-HflX-like GTPase superfamily. OBG GTPase family. Monomer. It depends on Mg(2+) as a cofactor.

The protein localises to the cytoplasm. In terms of biological role, an essential GTPase which binds GTP, GDP and possibly (p)ppGpp with moderate affinity, with high nucleotide exchange rates and a fairly low GTP hydrolysis rate. Plays a role in control of the cell cycle, stress response, ribosome biogenesis and in those bacteria that undergo differentiation, in morphogenesis control. The protein is GTPase Obg of Mycoplasmopsis agalactiae (strain NCTC 10123 / CIP 59.7 / PG2) (Mycoplasma agalactiae).